The chain runs to 819 residues: Protein EFR3 homolog A (819 aa).

Phosphoserine is present on residues serine 360, serine 363, serine 420, and serine 692.

It belongs to the EFR3 family. Component of a phosphatidylinositol 4-kinase (PI4K) complex, composed of PI4KA, EFR3 (EFR3A or EFR3B), TTC7 (TTC7A or TTC7B) and HYCC (HYCC1 or HYCC2). Palmitoylated at its N-terminus, anchoring the protein to the plasma membrane. As to expression, widely expressed. Expressed in neurons of the superior olivary complex of the auditory brainstem. Also expressed at lower levels in the cochlear nucleus, the lateral leminiscal nuclei and the inferior collicus.

It localises to the cell membrane. The protein localises to the cytoplasm. It is found in the cytosol. Functionally, component of a complex required to localize phosphatidylinositol 4-kinase (PI4K) to the plasma membrane. The complex acts as a regulator of phosphatidylinositol 4-phosphate (PtdIns(4)P) synthesis. In the complex, EFR3A probably acts as the membrane-anchoring component. Also involved in responsiveness to G-protein-coupled receptors; it is however unclear whether this role is direct or indirect. The sequence is that of Protein EFR3 homolog A from Mus musculus (Mouse).